The chain runs to 450 residues: Isoleucine 2-epimerase (450 aa).

Pyridoxal 5'-phosphate contacts are provided by residues 115-116, Tyr-142, and 250-253; these read GS and DEVN. At Lys-280 the chain carries N6-(pyridoxal phosphate)lysine. Residue Thr-309 coordinates pyridoxal 5'-phosphate.

It belongs to the class-III pyridoxal-phosphate-dependent aminotransferase family. In terms of assembly, homotetramer. Requires pyridoxal 5'-phosphate as cofactor.

The catalysed reaction is L-isoleucine = D-allo-isoleucine. In terms of biological role, catalyzes the epimerization of L-isoleucine to D-allo-isoleucine and D-allo-isoleucine to L-isoleucine. Can also catalyze the racemization of many nonpolar amino acids, including leucine and valine. Does not have GABA aminotransferase activity. The polypeptide is Isoleucine 2-epimerase (Lentilactobacillus buchneri (Lactobacillus buchneri)).